Reading from the N-terminus, the 221-residue chain is Protein RER1D (221 aa).

A run of 4 helical transmembrane segments spans residues 41-58, 64-84, 128-148, and 149-169; these read IVRRWLVTLVAAVIYIYR, GYFVISYGLATYILNLLIGFL, FVVAFVMTFFSFLDVPVFWPI, and LLCYWLVLYSLTMKRLIVHMF. Residues 200-221 are disordered; the sequence is KGDGGDDRPSSSNSSQGNEKQD. Positions 209 to 221 are enriched in polar residues; that stretch reads SSSNSSQGNEKQD.

It belongs to the RER1 family.

The protein resides in the membrane. Its function is as follows. Involved in the retrieval of endoplasmic reticulum membrane proteins from the early Golgi compartment. This is Protein RER1D from Arabidopsis thaliana (Mouse-ear cress).